Reading from the N-terminus, the 323-residue chain is Beta-ketoacyl-[acyl-carrier-protein] synthase III (323 aa).

Residues Cys-114 and His-250 contribute to the active site. The tract at residues 251 to 255 is ACP-binding; that stretch reads QANIR. The active site involves Asn-280.

It belongs to the thiolase-like superfamily. FabH family. Homodimer.

The protein resides in the cytoplasm. It carries out the reaction malonyl-[ACP] + acetyl-CoA + H(+) = 3-oxobutanoyl-[ACP] + CO2 + CoA. Its pathway is lipid metabolism; fatty acid biosynthesis. In terms of biological role, catalyzes the condensation reaction of fatty acid synthesis by the addition to an acyl acceptor of two carbons from malonyl-ACP. Catalyzes the first condensation reaction which initiates fatty acid synthesis and may therefore play a role in governing the total rate of fatty acid production. Possesses both acetoacetyl-ACP synthase and acetyl transacylase activities. Its substrate specificity determines the biosynthesis of branched-chain and/or straight-chain of fatty acids. The polypeptide is Beta-ketoacyl-[acyl-carrier-protein] synthase III (Ruegeria sp. (strain TM1040) (Silicibacter sp.)).